We begin with the raw amino-acid sequence, 396 residues long: Acetate kinase (396 aa).

N7 lines the Mg(2+) pocket. K14 is a binding site for ATP. R88 is a binding site for substrate. D145 functions as the Proton donor/acceptor in the catalytic mechanism. Residues 205-209, 279-281, and 327-331 contribute to the ATP site; these read HLGNG, DFR, and GIGEN. E381 contributes to the Mg(2+) binding site.

This sequence belongs to the acetokinase family. As to quaternary structure, homodimer. The cofactor is Mg(2+). Mn(2+) is required as a cofactor.

Its subcellular location is the cytoplasm. The enzyme catalyses acetate + ATP = acetyl phosphate + ADP. It functions in the pathway metabolic intermediate biosynthesis; acetyl-CoA biosynthesis; acetyl-CoA from acetate: step 1/2. Catalyzes the formation of acetyl phosphate from acetate and ATP. Can also catalyze the reverse reaction. The polypeptide is Acetate kinase (Campylobacter jejuni subsp. doylei (strain ATCC BAA-1458 / RM4099 / 269.97)).